A 155-amino-acid polypeptide reads, in one-letter code: Small ribosomal subunit protein uS7 (155 aa).

This sequence belongs to the universal ribosomal protein uS7 family. In terms of assembly, part of the 30S ribosomal subunit. Contacts proteins S9 and S11.

Its function is as follows. One of the primary rRNA binding proteins, it binds directly to 16S rRNA where it nucleates assembly of the head domain of the 30S subunit. Is located at the subunit interface close to the decoding center, probably blocks exit of the E-site tRNA. In Corynebacterium glutamicum (strain R), this protein is Small ribosomal subunit protein uS7.